Here is a 263-residue protein sequence, read N- to C-terminus: uncharacterized protein (263 aa).

Residue 31–38 (GPTGSGKT) coordinates ATP.

It belongs to the CbbQ/NirQ/NorQ/GpvN family.

This is an uncharacterized protein from Staphylococcus aureus (strain NCTC 8325 / PS 47).